The chain runs to 67 residues: Histone H2A (67 aa).

Q60 carries the post-translational modification N5-methylglutamine.

Belongs to the histone H2A family. As to quaternary structure, the nucleosome is a histone octamer containing two molecules each of H2A, H2B, H3 and H4 assembled in one H3-H4 heterotetramer and two H2A-H2B heterodimers. The octamer wraps approximately 147 bp of DNA.

Its subcellular location is the nucleus. It localises to the chromosome. Its function is as follows. Core component of nucleosome. Nucleosomes wrap and compact DNA into chromatin, limiting DNA accessibility to the cellular machineries which require DNA as a template. Histones thereby play a central role in transcription regulation, DNA repair, DNA replication and chromosomal stability. DNA accessibility is regulated via a complex set of post-translational modifications of histones, also called histone code, and nucleosome remodeling. The protein is Histone H2A of Olisthodiscus luteus (Marine phytoflagellate).